We begin with the raw amino-acid sequence, 440 residues long: Deoxyguanosinetriphosphate triphosphohydrolase-like protein (440 aa).

In terms of domain architecture, HD spans 61–256 (RLIHSLEVSC…MEAADDLCYS (196 aa)).

Belongs to the dGTPase family. Type 3 subfamily.

This chain is Deoxyguanosinetriphosphate triphosphohydrolase-like protein, found in Synechocystis sp. (strain ATCC 27184 / PCC 6803 / Kazusa).